We begin with the raw amino-acid sequence, 149 residues long: UPF0260 protein PSPTO_3918 (149 aa).

The protein belongs to the UPF0260 family.

The protein is UPF0260 protein PSPTO_3918 of Pseudomonas syringae pv. tomato (strain ATCC BAA-871 / DC3000).